The chain runs to 281 residues: MSREEVLVSTDWAEQNLNTDGVVFAEVDEDTTAYDGGHIPGAIKLDWKNELQDHVRRDFVNREGFEKLLSAKGIGNDDTVILYGGNNNWFAAYAYWYFKLYGHSDVKLLDGGRKKWELDGRELTKEEPNRAATAYKAQEPDASIRAFRDEVVDAIGNKNLVDVRSPDEFAGKLLAPAHLPQESAQRAGHIPSAINVPWSKAANEDGTFKSDEELKQVYGEAGLDTDKDTIAYCRIGERSSHTWFVLRELLGHTNVKNYDGSWTEYGSLVGVPIENPQEQGA.

Rhodanese domains follow at residues 18 to 125 and 154 to 274; these read NTDG…ELTK and AIGN…VPIE. Cys233 serves as the catalytic Cysteine persulfide intermediate. Residue Arg238 coordinates substrate.

It carries out the reaction thiosulfate + hydrogen cyanide = thiocyanate + sulfite + 2 H(+). Functionally, may be a sulfotransferase involved in the formation of thiosulfate. The chain is Putative thiosulfate sulfurtransferase (cysA) from Saccharopolyspora erythraea (Streptomyces erythraeus).